The sequence spans 249 residues: 2,3-bisphosphoglycerate-dependent phosphoglycerate mutase (249 aa).

Residues 8–15 (RHGESTWN), 21–22 (TG), Arg-60, 87–90 (ERHY), Lys-98, 114–115 (RR), and 183–184 (GN) contribute to the substrate site. His-9 acts as the Tele-phosphohistidine intermediate in catalysis. The active-site Proton donor/acceptor is the Glu-87.

It belongs to the phosphoglycerate mutase family. BPG-dependent PGAM subfamily. As to quaternary structure, homodimer.

It catalyses the reaction (2R)-2-phosphoglycerate = (2R)-3-phosphoglycerate. Its pathway is carbohydrate degradation; glycolysis; pyruvate from D-glyceraldehyde 3-phosphate: step 3/5. Its function is as follows. Catalyzes the interconversion of 2-phosphoglycerate and 3-phosphoglycerate. The sequence is that of 2,3-bisphosphoglycerate-dependent phosphoglycerate mutase from Aromatoleum aromaticum (strain DSM 19018 / LMG 30748 / EbN1) (Azoarcus sp. (strain EbN1)).